The following is a 194-amino-acid chain: Putative lipoprotein LppK (194 aa).

The first 26 residues, 1 to 26 (MSRWTHRTFFIALSAIVTTAGFGSSG), serve as a signal peptide directing secretion. The N-palmitoyl cysteine moiety is linked to residue Cys-27. Cys-27 carries the S-diacylglycerol cysteine lipid modification. The interval 174–194 (GNSSGLTNPAPIKAPTPTPSH) is disordered. The span at 185 to 194 (IKAPTPTPSH) shows a compositional bias: pro residues.

This sequence belongs to the MTB12 family.

The protein resides in the cell membrane. The chain is Putative lipoprotein LppK (lppK) from Mycobacterium leprae (strain TN).